The chain runs to 206 residues: Small ribosomal subunit protein uS4 (206 aa).

Positions 96-156 (GRLDNVVYRM…EKSKKQARIK (61 aa)) constitute an S4 RNA-binding domain.

Belongs to the universal ribosomal protein uS4 family. Part of the 30S ribosomal subunit. Contacts protein S5. The interaction surface between S4 and S5 is involved in control of translational fidelity.

One of the primary rRNA binding proteins, it binds directly to 16S rRNA where it nucleates assembly of the body of the 30S subunit. In terms of biological role, with S5 and S12 plays an important role in translational accuracy. This is Small ribosomal subunit protein uS4 from Histophilus somni (strain 129Pt) (Haemophilus somnus).